A 158-amino-acid chain; its full sequence is NAD(P)H-quinone oxidoreductase subunit J, chloroplastic (158 aa).

It belongs to the complex I 30 kDa subunit family. NDH is composed of at least 16 different subunits, 5 of which are encoded in the nucleus.

The protein localises to the plastid. It localises to the chloroplast thylakoid membrane. It catalyses the reaction a plastoquinone + NADH + (n+1) H(+)(in) = a plastoquinol + NAD(+) + n H(+)(out). The catalysed reaction is a plastoquinone + NADPH + (n+1) H(+)(in) = a plastoquinol + NADP(+) + n H(+)(out). NDH shuttles electrons from NAD(P)H:plastoquinone, via FMN and iron-sulfur (Fe-S) centers, to quinones in the photosynthetic chain and possibly in a chloroplast respiratory chain. The immediate electron acceptor for the enzyme in this species is believed to be plastoquinone. Couples the redox reaction to proton translocation, and thus conserves the redox energy in a proton gradient. The chain is NAD(P)H-quinone oxidoreductase subunit J, chloroplastic from Cicer arietinum (Chickpea).